Reading from the N-terminus, the 314-residue chain is Solute carrier family 25 member 44 (314 aa).

Solcar repeat units lie at residues 18–100, 107–210, and 220–302; these read KKFY…TRKF, SNTV…YAEQ, and PHIV…LKKL. The next 6 helical transmembrane spans lie at 20-42, 71-90, 113-133, 185-201, 222-239, and 278-296; these read FYVF…TLIR, TGLY…GQCY, LVAG…IDVV, GYVA…AVWW, IVFQ…ASIL, and LSAR…VVGY.

The protein belongs to the mitochondrial carrier (TC 2.A.29) family.

Its subcellular location is the mitochondrion membrane. It carries out the reaction L-valine(in) = L-valine(out). It catalyses the reaction L-leucine(in) = L-leucine(out). Its function is as follows. Mitochondrial solute transporter which transports branched-chain amino acid (BCAA; valine, leucine and isoleucine) into mitochondria in brown adipose tissue (BAT). BAT is involved in BCAA catabolism and actively utilizes BCAA in the mitochondria for thermogenesis. The polypeptide is Solute carrier family 25 member 44 (Pongo abelii (Sumatran orangutan)).